Consider the following 219-residue polypeptide: 2,5-diamino-6-ribosylamino-4(3H)-pyrimidinone 5'-phosphate reductase (219 aa).

NADP(+) contacts are provided by residues Thr52, Asp56, 87-90 (SRCR), Val134, and 156-159 (GGTL).

Belongs to the HTP reductase family. In terms of assembly, homodimer.

It catalyses the reaction 2,5-diamino-6-(1-D-ribitylamino)pyrimidin-4(3H)-one 5'-phosphate + NADP(+) = 2,5-diamino-6-(1-D-ribosylamino)pyrimidin-4(3H)-one 5'-phosphate + NADPH + H(+). The catalysed reaction is 2,5-diamino-6-(1-D-ribitylamino)pyrimidin-4(3H)-one 5'-phosphate + NAD(+) = 2,5-diamino-6-(1-D-ribosylamino)pyrimidin-4(3H)-one 5'-phosphate + NADH + H(+). Its pathway is cofactor biosynthesis; riboflavin biosynthesis. Functionally, catalyzes an early step in riboflavin biosynthesis, the NADPH-dependent reduction of the ribose side chain of 2,5-diamino-6-ribosylamino-4(3H)-pyrimidinone 5'-phosphate, yielding 2,5-diamino-6-ribitylamino-4(3H)-pyrimidinone 5'-phosphate. This Archaeoglobus fulgidus (strain ATCC 49558 / DSM 4304 / JCM 9628 / NBRC 100126 / VC-16) protein is 2,5-diamino-6-ribosylamino-4(3H)-pyrimidinone 5'-phosphate reductase.